A 129-amino-acid polypeptide reads, in one-letter code: Phosphoribosyl-AMP cyclohydrolase (129 aa).

D76 is a Mg(2+) binding site. Zn(2+) is bound at residue C77. Residues D78 and D80 each coordinate Mg(2+). Zn(2+)-binding residues include C97 and C104.

The protein belongs to the PRA-CH family. In terms of assembly, homodimer. Mg(2+) is required as a cofactor. It depends on Zn(2+) as a cofactor.

It localises to the cytoplasm. The enzyme catalyses 1-(5-phospho-beta-D-ribosyl)-5'-AMP + H2O = 1-(5-phospho-beta-D-ribosyl)-5-[(5-phospho-beta-D-ribosylamino)methylideneamino]imidazole-4-carboxamide. It participates in amino-acid biosynthesis; L-histidine biosynthesis; L-histidine from 5-phospho-alpha-D-ribose 1-diphosphate: step 3/9. Functionally, catalyzes the hydrolysis of the adenine ring of phosphoribosyl-AMP. The polypeptide is Phosphoribosyl-AMP cyclohydrolase (Albidiferax ferrireducens (strain ATCC BAA-621 / DSM 15236 / T118) (Rhodoferax ferrireducens)).